A 601-amino-acid polypeptide reads, in one-letter code: Elongation factor 4 (601 aa).

The tr-type G domain occupies 5 to 187; sequence SNIRNFAIIA…AIVTKLPSPN (183 aa). GTP-binding positions include 17 to 22 and 134 to 137; these read DHGKST and NKID.

Belongs to the TRAFAC class translation factor GTPase superfamily. Classic translation factor GTPase family. LepA subfamily.

The protein resides in the cell inner membrane. It carries out the reaction GTP + H2O = GDP + phosphate + H(+). In terms of biological role, required for accurate and efficient protein synthesis under certain stress conditions. May act as a fidelity factor of the translation reaction, by catalyzing a one-codon backward translocation of tRNAs on improperly translocated ribosomes. Back-translocation proceeds from a post-translocation (POST) complex to a pre-translocation (PRE) complex, thus giving elongation factor G a second chance to translocate the tRNAs correctly. Binds to ribosomes in a GTP-dependent manner. In Orientia tsutsugamushi (strain Ikeda) (Rickettsia tsutsugamushi), this protein is Elongation factor 4.